An 879-amino-acid chain; its full sequence is DNA mismatch repair protein MutS (879 aa).

Position 629–636 (629–636 (GPNMAGKS)) interacts with ATP.

It belongs to the DNA mismatch repair MutS family.

This protein is involved in the repair of mismatches in DNA. It is possible that it carries out the mismatch recognition step. This protein has a weak ATPase activity. The protein is DNA mismatch repair protein MutS of Ruegeria sp. (strain TM1040) (Silicibacter sp.).